Here is a 530-residue protein sequence, read N- to C-terminus: UDP-glucuronosyltransferase 2B17 (530 aa).

Residues 1 to 23 form the signal peptide; the sequence is MSLKWMSVFLLMQLSCYFSSGSC. A glycan (N-linked (GlcNAc...) asparagine) is linked at N65. At K136 the chain carries N6-succinyllysine. 2 N-linked (GlcNAc...) asparagine glycosylation sites follow: N316 and N483. A helical transmembrane segment spans residues 495 to 515; the sequence is IAFLLACVATMIFMITKCCLF.

Belongs to the UDP-glycosyltransferase family. Expressed in various tissues including the liver, kidney, testis, uterus, placenta, mammary gland, adrenal gland, skin and prostate.

The protein localises to the endoplasmic reticulum membrane. The enzyme catalyses glucuronate acceptor + UDP-alpha-D-glucuronate = acceptor beta-D-glucuronoside + UDP + H(+). It catalyses the reaction 17alpha-estradiol + UDP-alpha-D-glucuronate = 17alpha-estradiol 3-O-(beta-D-glucuronate) + UDP + H(+). It carries out the reaction 17alpha-estradiol + UDP-alpha-D-glucuronate = 17alpha-estradiol 17-O-(beta-D-glucuronate) + UDP + H(+). The catalysed reaction is 17beta-estradiol + UDP-alpha-D-glucuronate = 17beta-estradiol 17-O-(beta-D-glucuronate) + UDP + H(+). The enzyme catalyses 17beta-hydroxy-5alpha-androstan-3-one + UDP-alpha-D-glucuronate = 5alpha-dihydrotestosterone 17-O-(beta-D-glucuronate) + UDP + H(+). It catalyses the reaction testosterone + UDP-alpha-D-glucuronate = testosterone 17-O-(beta-D-glucuronate) + UDP + H(+). UDP-glucuronosyltransferase (UGT) that catalyzes phase II biotransformation reactions in which lipophilic substrates are conjugated with glucuronic acid to increase the metabolite's water solubility, thereby facilitating excretion into either the urine or bile. Catalyzes the glucuronidation of endogenous steroid hormones such as androgens (epitestosterone, androsterone) and estrogens (estradiol, epiestradiol). In Homo sapiens (Human), this protein is UDP-glucuronosyltransferase 2B17.